The sequence spans 635 residues: 1-deoxy-D-xylulose-5-phosphate synthase (635 aa).

Residues histidine 78 and 119 to 121 (GHA) each bind thiamine diphosphate. Aspartate 151 lines the Mg(2+) pocket. Residues 152-153 (GA), asparagine 180, and tyrosine 291 each bind thiamine diphosphate. Asparagine 180 lines the Mg(2+) pocket. The interval 305-325 (PAFEDRGGTPVTRGSDGRPPY) is disordered. Glutamate 374 is a thiamine diphosphate binding site.

This sequence belongs to the transketolase family. DXPS subfamily. As to quaternary structure, homodimer. The cofactor is Mg(2+). Thiamine diphosphate serves as cofactor.

It catalyses the reaction D-glyceraldehyde 3-phosphate + pyruvate + H(+) = 1-deoxy-D-xylulose 5-phosphate + CO2. The protein operates within metabolic intermediate biosynthesis; 1-deoxy-D-xylulose 5-phosphate biosynthesis; 1-deoxy-D-xylulose 5-phosphate from D-glyceraldehyde 3-phosphate and pyruvate: step 1/1. Its function is as follows. Catalyzes the acyloin condensation reaction between C atoms 2 and 3 of pyruvate and glyceraldehyde 3-phosphate to yield 1-deoxy-D-xylulose-5-phosphate (DXP). The polypeptide is 1-deoxy-D-xylulose-5-phosphate synthase (Rhodopirellula baltica (strain DSM 10527 / NCIMB 13988 / SH1)).